The sequence spans 217 residues: Phosphatidylserine decarboxylase proenzyme (217 aa).

S182 serves as the catalytic Schiff-base intermediate with substrate; via pyruvic acid. At S182 the chain carries Pyruvic acid (Ser); by autocatalysis.

The protein belongs to the phosphatidylserine decarboxylase family. PSD-A subfamily. In terms of assembly, heterodimer of a large membrane-associated beta subunit and a small pyruvoyl-containing alpha subunit. The cofactor is pyruvate. Post-translationally, is synthesized initially as an inactive proenzyme. Formation of the active enzyme involves a self-maturation process in which the active site pyruvoyl group is generated from an internal serine residue via an autocatalytic post-translational modification. Two non-identical subunits are generated from the proenzyme in this reaction, and the pyruvate is formed at the N-terminus of the alpha chain, which is derived from the carboxyl end of the proenzyme. The post-translation cleavage follows an unusual pathway, termed non-hydrolytic serinolysis, in which the side chain hydroxyl group of the serine supplies its oxygen atom to form the C-terminus of the beta chain, while the remainder of the serine residue undergoes an oxidative deamination to produce ammonia and the pyruvoyl prosthetic group on the alpha chain.

Its subcellular location is the cell membrane. The catalysed reaction is a 1,2-diacyl-sn-glycero-3-phospho-L-serine + H(+) = a 1,2-diacyl-sn-glycero-3-phosphoethanolamine + CO2. Its pathway is phospholipid metabolism; phosphatidylethanolamine biosynthesis; phosphatidylethanolamine from CDP-diacylglycerol: step 2/2. In terms of biological role, catalyzes the formation of phosphatidylethanolamine (PtdEtn) from phosphatidylserine (PtdSer). The polypeptide is Phosphatidylserine decarboxylase proenzyme (Prosthecochloris aestuarii (strain DSM 271 / SK 413)).